The following is a 388-amino-acid chain: 3-sulfinopropanoyl-CoA desulfinase (388 aa).

FAD is bound by residues 121–124, Ser130, and 153–156; these read ICIT and HWIT. 240–241 is a binding site for substrate; sequence YN. FAD contacts are provided by residues Arg269, Gln336, 363–367, and Gln384; that span reads GGTAQ.

The protein belongs to the acyl-CoA dehydrogenase family. Homotrimer or homotetramer. FAD serves as cofactor.

The catalysed reaction is 3-sulfinopropanoyl-CoA + H2O = propanoyl-CoA + sulfite + H(+). In terms of biological role, catalyzes the conversion 3-sulfinopropanoyl-CoA (3SP-CoA) to propanoyl-CoA by abstraction of sulfite. Does not show dehydrogenase activity. This Paraburkholderia xenovorans (strain LB400) protein is 3-sulfinopropanoyl-CoA desulfinase.